A 315-amino-acid chain; its full sequence is DNA-directed RNA polymerase subunit alpha (315 aa).

The alpha N-terminal domain (alpha-NTD) stretch occupies residues 1-228; the sequence is MLEIEKPKIE…EHFKLFMTLT (228 aa). The alpha C-terminal domain (alpha-CTD) stretch occupies residues 245–315; it reads KEKVLEMAIE…LGLSLKQNED (71 aa).

It belongs to the RNA polymerase alpha chain family. In terms of assembly, homodimer. The RNAP catalytic core consists of 2 alpha, 1 beta, 1 beta' and 1 omega subunit. When a sigma factor is associated with the core the holoenzyme is formed, which can initiate transcription.

The enzyme catalyses RNA(n) + a ribonucleoside 5'-triphosphate = RNA(n+1) + diphosphate. Its function is as follows. DNA-dependent RNA polymerase catalyzes the transcription of DNA into RNA using the four ribonucleoside triphosphates as substrates. This Clostridium kluyveri (strain NBRC 12016) protein is DNA-directed RNA polymerase subunit alpha.